Consider the following 598-residue polypeptide: UvrABC system protein C (598 aa).

Residues 13–92 form the GIY-YIG domain; sequence SSPGVYLMKD…IKKYQPRYNV (80 aa). In terms of domain architecture, UVR spans 206–241; sequence RSTISNLEKAIEKASQEQKFEHAAALYRTLTLIRQT.

It belongs to the UvrC family. Interacts with UvrB in an incision complex.

It is found in the cytoplasm. Its function is as follows. The UvrABC repair system catalyzes the recognition and processing of DNA lesions. UvrC both incises the 5' and 3' sides of the lesion. The N-terminal half is responsible for the 3' incision and the C-terminal half is responsible for the 5' incision. The protein is UvrABC system protein C of Chlamydia trachomatis serovar A (strain ATCC VR-571B / DSM 19440 / HAR-13).